Here is a 266-residue protein sequence, read N- to C-terminus: Protein crossbronx-like (266 aa).

In terms of domain architecture, UBC core spans 15 to 178 (KQGYKILAEY…IQELAISSRR (164 aa)). The tract at residues 216 to 266 (EATCEDDSPPAELLGHIDSSRQLDEDEANQRGKLQAATTDLQHGARCSVAQ) is disordered.

The protein belongs to the ubiquitin-conjugating enzyme family. FTS subfamily.

The protein is Protein crossbronx-like of Drosophila ananassae (Fruit fly).